We begin with the raw amino-acid sequence, 751 residues long: Protein WEAK CHLOROPLAST MOVEMENT UNDER BLUE LIGHT-like 3 (751 aa).

Serine 113 bears the Phosphoserine mark. 2 coiled-coil regions span residues 165–558 (ERRK…ALQE) and 588–647 (QALE…KARD). 2 stretches are compositionally biased toward basic and acidic residues: residues 455–467 (RERQDLEETKQKE) and 625–689 (NREM…RNKE). Disordered stretches follow at residues 455–479 (RERQDLEETKQKESTGLARTNDKDA) and 625–751 (NREM…HSHK). Over residues 704 to 723 (GSSSNNTGGSTTTNNNNLTP) the composition is skewed to low complexity.

This sequence belongs to the WEB family.

This Arabidopsis thaliana (Mouse-ear cress) protein is Protein WEAK CHLOROPLAST MOVEMENT UNDER BLUE LIGHT-like 3 (WEL3).